Here is a 429-residue protein sequence, read N- to C-terminus: Histidinol dehydrogenase (429 aa).

Positions 130, 191, and 214 each coordinate NAD(+). Positions 237, 259, and 262 each coordinate substrate. The Zn(2+) site is built by Q259 and H262. Catalysis depends on proton acceptor residues E327 and H328. Residues H328, D361, E415, and H420 each coordinate substrate. D361 serves as a coordination point for Zn(2+). Residue H420 participates in Zn(2+) binding.

Belongs to the histidinol dehydrogenase family. It depends on Zn(2+) as a cofactor.

It catalyses the reaction L-histidinol + 2 NAD(+) + H2O = L-histidine + 2 NADH + 3 H(+). It participates in amino-acid biosynthesis; L-histidine biosynthesis; L-histidine from 5-phospho-alpha-D-ribose 1-diphosphate: step 9/9. In terms of biological role, catalyzes the sequential NAD-dependent oxidations of L-histidinol to L-histidinaldehyde and then to L-histidine. The sequence is that of Histidinol dehydrogenase from Neisseria meningitidis serogroup A / serotype 4A (strain DSM 15465 / Z2491).